Here is a 203-residue protein sequence, read N- to C-terminus: Anti-sigma-W factor RsiW (203 aa).

At 1–86 (MECPKEIVLL…TARLRRFLHR (86 aa)) the chain is on the cytoplasmic side. Histidine 30, cysteine 34, and cysteine 37 together coordinate Zn(2+). A helical transmembrane segment spans residues 87–103 (HPLLTAASLFLALTLGS). At 104–203 (LASSWGERGA…RFNRALQSIE (100 aa)) the chain is on the extracellular side.

Belongs to the zinc-associated anti-sigma factor (ZAS) superfamily. Anti-sigma-W factor family. It depends on Zn(2+) as a cofactor. In terms of processing, is processed by three successive proteolytic events. First, the extracellular region of RsiW is cleaved by PrsW (Site-1 cleavage) in response to cell envelope stresses. Next, it undergoes cleavage at an intramembrane site (Site-2 cleavage) mediated by RasP. This cleavage uncovers a cryptic proteolytic tag with conserved alanine residues in the transmembrane segment, that is recognized mainly by the ClpXP protease, which completely degrades the protein in the cytoplasm and leads to the induction of the sigma-W-controlled genes.

The protein localises to the membrane. In terms of biological role, is the anti-sigma factor for SigW. The presence of RsiW leads to the inactivation of SigW, and its proteolytic destruction to sigma-W activation. The sequence is that of Anti-sigma-W factor RsiW (rsiW) from Geobacillus kaustophilus (strain HTA426).